Here is a 382-residue protein sequence, read N- to C-terminus: MIKSALLVLEDGTQFHGRAIGAEGLAVGEVVFNTSMTGYQEILTDPSYSRQIVTLTYPHIGNVGANANDEESPSVQAQGLVIRDLPLIASNYRSEESLSEYLKRNNIVAIADIDTRKLTRLLREKGAQNGCIIAGDAPDAVVALEKAKAFPGLKGMDLAKEVTTAESYSWLQGSWTLEGELPAAKNESELPYHVVAYDYGVKRNILRMLVDRGCRLTVVPAQTPAEDVLKLNPDGIFLSNGPGDPEPCDYAIRAIKTFLETGIPVFGICLGHQLLALASGAKTTKMKLGHHGGNHPVKDLDNNCVMITAQNHGFAVDEDNLPDTLRVTHKSLFDHTVQGIHRTDKPAFSFQGHPEASPGPHDAAPLFDHFIDLIQTYRSSAK.

The interval 1–189 (MIKSALLVLE…ELPAAKNESE (189 aa)) is CPSase. Positions 47, 241, and 243 each coordinate L-glutamine. Residues 193–380 (HVVAYDYGVK…IDLIQTYRSS (188 aa)) enclose the Glutamine amidotransferase type-1 domain. The Nucleophile role is filled by cysteine 269. Residues leucine 270, glutamine 273, asparagine 311, glycine 313, and phenylalanine 314 each coordinate L-glutamine. Active-site residues include histidine 353 and glutamate 355.

The protein belongs to the CarA family. Composed of two chains; the small (or glutamine) chain promotes the hydrolysis of glutamine to ammonia, which is used by the large (or ammonia) chain to synthesize carbamoyl phosphate. Tetramer of heterodimers (alpha,beta)4.

The catalysed reaction is hydrogencarbonate + L-glutamine + 2 ATP + H2O = carbamoyl phosphate + L-glutamate + 2 ADP + phosphate + 2 H(+). It carries out the reaction L-glutamine + H2O = L-glutamate + NH4(+). It participates in amino-acid biosynthesis; L-arginine biosynthesis; carbamoyl phosphate from bicarbonate: step 1/1. It functions in the pathway pyrimidine metabolism; UMP biosynthesis via de novo pathway; (S)-dihydroorotate from bicarbonate: step 1/3. Its function is as follows. Small subunit of the glutamine-dependent carbamoyl phosphate synthetase (CPSase). CPSase catalyzes the formation of carbamoyl phosphate from the ammonia moiety of glutamine, carbonate, and phosphate donated by ATP, constituting the first step of 2 biosynthetic pathways, one leading to arginine and/or urea and the other to pyrimidine nucleotides. The small subunit (glutamine amidotransferase) binds and cleaves glutamine to supply the large subunit with the substrate ammonia. In Pectobacterium atrosepticum (strain SCRI 1043 / ATCC BAA-672) (Erwinia carotovora subsp. atroseptica), this protein is Carbamoyl phosphate synthase small chain.